The chain runs to 172 residues: C-phycocyanin beta subunit (172 aa).

Asparagine 72 bears the N4-methylasparagine mark. Positions 82 and 153 each coordinate (2R,3E)-phycocyanobilin.

The protein belongs to the phycobiliprotein family. As to quaternary structure, heterodimer of an alpha and a beta subunit, which further assembles into trimers and the trimers into hexamers. Post-translationally, contains two covalently linked bilin chromophores.

The protein localises to the cellular thylakoid membrane. In terms of biological role, light-harvesting photosynthetic bile pigment-protein from the phycobiliprotein complex (phycobilisome, PBS). Phycocyanin is the major phycobiliprotein in the PBS rod. In Synechocystis sp. (strain PCC 6701), this protein is C-phycocyanin beta subunit (cpcB).